We begin with the raw amino-acid sequence, 103 residues long: A-type ATP synthase subunit F (103 aa).

Belongs to the V-ATPase F subunit family. As to quaternary structure, has multiple subunits with at least A(3), B(3), C, D, E, F, H, I and proteolipid K(x).

It is found in the cell membrane. In terms of biological role, component of the A-type ATP synthase that produces ATP from ADP in the presence of a proton gradient across the membrane. This chain is A-type ATP synthase subunit F, found in Pyrococcus abyssi (strain GE5 / Orsay).